We begin with the raw amino-acid sequence, 401 residues long: Voltage-gated potassium channel subunit beta-1 (401 aa).

4 residues coordinate NADP(+): threonine 90, tryptophan 91, glutamine 97, and aspartate 119. The Proton donor/acceptor role is filled by tyrosine 124. Residues asparagine 192, serine 222, arginine 223, glutamine 248, tryptophan 277, serine 278, proline 279, leucine 280, alanine 281, cysteine 282, lysine 288, arginine 298, glycine 357, serine 359, glutamine 363, glutamate 366, and asparagine 367 each coordinate NADP(+).

It belongs to the shaker potassium channel beta subunit family. In terms of assembly, homotetramer. Interaction with tetrameric potassium channel alpha subunits gives rise to a heterooctamer.

The protein resides in the cytoplasm. The protein localises to the membrane. It is found in the cell membrane. It carries out the reaction a primary alcohol + NADP(+) = an aldehyde + NADPH + H(+). The enzyme catalyses a secondary alcohol + NADP(+) = a ketone + NADPH + H(+). Functionally, regulatory subunit of the voltage-gated potassium (Kv) channels composed of pore-forming and potassium-conducting alpha subunits and of regulatory beta subunits. The beta-1/KCNAB1 cytoplasmic subunit mediates closure of delayed rectifier potassium channels by physically obstructing the pore via its N-terminal domain and increases the speed of channel closure for other family members. Promotes the inactivation of KCNA1, KCNA2, KCNA4, KCNA5 and KCNA6 alpha subunit-containing channels. Displays nicotinamide adenine dinucleotide phosphate (NADPH)-dependent aldoketoreductase activity by catalyzing the NADPH-dependent reduction of a variety of endogenous aldehydes and ketones. The binding of NADPH is required for efficient down-regulation of potassium channel activity. Oxidation of the bound NADPH restrains N-terminal domain from blocking the channel, thereby decreasing N-type inactivation of potassium channel activity. This is Voltage-gated potassium channel subunit beta-1 (KCNAB1) from Gallus gallus (Chicken).